Consider the following 103-residue polypeptide: ATP synthase F(0) complex subunit g, mitochondrial (103 aa).

An N-acetylalanine modification is found at Ala-2. 3 positions are modified to N6-acetyllysine: Lys-11, Lys-24, and Lys-54.

This sequence belongs to the ATPase g subunit family. In terms of assembly, component of the ATP synthase complex composed at least of ATP5F1A/subunit alpha, ATP5F1B/subunit beta, ATP5MC1/subunit c (homooctomer), MT-ATP6/subunit a, MT-ATP8/subunit 8, ATP5ME/subunit e, ATP5MF/subunit f, ATP5MG/subunit g, ATP5MK/subunit k, ATP5MJ/subunit j, ATP5F1C/subunit gamma, ATP5F1D/subunit delta, ATP5F1E/subunit epsilon, ATP5PF/subunit F6, ATP5PB/subunit b, ATP5PD/subunit d, ATP5PO/subunit OSCP. ATP synthase complex consists of a soluble F(1) head domain (subunits alpha(3) and beta(3)) - the catalytic core - and a membrane F(0) domain - the membrane proton channel (subunits c, a, 8, e, f, g, k and j). These two domains are linked by a central stalk (subunits gamma, delta, and epsilon) rotating inside the F1 region and a stationary peripheral stalk (subunits F6, b, d, and OSCP).

It localises to the mitochondrion. It is found in the mitochondrion inner membrane. Subunit g, of the mitochondrial membrane ATP synthase complex (F(1)F(0) ATP synthase or Complex V) that produces ATP from ADP in the presence of a proton gradient across the membrane which is generated by electron transport complexes of the respiratory chain. ATP synthase complex consist of a soluble F(1) head domain - the catalytic core - and a membrane F(1) domain - the membrane proton channel. These two domains are linked by a central stalk rotating inside the F(1) region and a stationary peripheral stalk. During catalysis, ATP synthesis in the catalytic domain of F(1) is coupled via a rotary mechanism of the central stalk subunits to proton translocation. In vivo, can only synthesize ATP although its ATP hydrolase activity can be activated artificially in vitro. Part of the complex F(0) domain. The sequence is that of ATP synthase F(0) complex subunit g, mitochondrial from Rattus norvegicus (Rat).